We begin with the raw amino-acid sequence, 344 residues long: MSNAITMGIFWHLIGAASAACFYAPFKQVKQWSWETMWSVGGIVSWLILPWAISALLLPDFWAYYGQFNLSTLLPVFLFGAMWGIGNINYGLTMRYLGMSMGIGIAIGITLIVGTLMTPIINGNFDVLIHTEGGRMTLLGVFVALIGVGIVTRAGQLKERKMGIKAEEFNLKKGLLLAVMCGIFSAGMSFAMNAAKPMHEAAAALGVDPLYVALPSYVVIMGGGALVNLGFCFIRLAKVQNLSIKADFSLARPLIISNILLSALGGLMWYLQFFFYAWGHARIPAQYDYMSWMLHMSFYVLCGGLVGLVLKEWKNAGRRPVAVLSLGCVVIIIAANIVGLGMAS.

A run of 10 helical transmembrane segments spans residues 4 to 24, 38 to 58, 68 to 88, 101 to 121, 137 to 157, 175 to 195, 214 to 234, 259 to 279, 290 to 310, and 321 to 341; these read AITM…CFYA, WSVG…ALLL, FNLS…IGNI, MGIG…TPII, TLLG…AGQL, LLLA…MNAA, LPSY…FCFI, ILLS…YAWG, MSWM…GLVL, and VAVL…VGLG.

Belongs to the L-rhamnose transporter (TC 2.A.7.6) family.

Its subcellular location is the cell inner membrane. It catalyses the reaction L-rhamnopyranose(in) + H(+)(in) = L-rhamnopyranose(out) + H(+)(out). In terms of biological role, uptake of L-rhamnose across the cytoplasmic membrane with the concomitant transport of protons into the cell (symport system). This is L-rhamnose-proton symporter from Salmonella dublin (strain CT_02021853).